Consider the following 127-residue polypeptide: UPF0325 protein VS_2356 (127 aa).

The protein belongs to the UPF0325 family.

The protein is UPF0325 protein VS_2356 of Vibrio atlanticus (strain LGP32) (Vibrio splendidus (strain Mel32)).